The primary structure comprises 33 residues: Brevinin-2PTb (33 aa).

Cysteine 27 and cysteine 33 are disulfide-bonded.

As to expression, expressed by the skin glands.

Its subcellular location is the secreted. Has antibacterial activity against the Gram-positive bacterium S.aureus ATCC 25923 (MIC=9 uM) and the Gram-negative bacterium E.coli ATCC 25726 (MIC=9 uM). The protein is Brevinin-2PTb of Pulchrana picturata (Malaysian fire frog).